A 766-amino-acid polypeptide reads, in one-letter code: FYVE, RhoGEF and PH domain-containing protein 4 (766 aa).

Positions 1–150 (MEESNPAPTS…SSVTNSHDEN (150 aa)) are actin filament-binding. Composition is skewed to polar residues over residues 43–65 (STMNLNIPQTPRQHGLTSTTPQK), 132–145 (RNETTTDSASSVTN), and 152–161 (CDSSCRTQGT). The segment at 43 to 167 (STMNLNIPQT…TQGTDLGLPS (125 aa)) is disordered. Residues 206–393 (KLHKIATELL…STAASHSNSA (188 aa)) enclose the DH domain. The 100-residue stretch at 422 to 521 (ELIKEGQILK…WIKALQESID (100 aa)) folds into the PH 1 domain. The FYVE-type zinc-finger motif lies at 559–619 (DNEVTMCMKC…VCKDCYQIMS (61 aa)). Residues Cys565, Cys568, Cys582, Cys585, Cys590, Cys593, Cys611, and Cys614 each contribute to the Zn(2+) site. Positions 643–740 (NSEVCSFLQY…WLKIILLAVT (98 aa)) constitute a PH 2 domain. Residues Ser702 and Ser716 each carry the phosphoserine modification. The tract at residues 745-766 (DGPSEHLDTLDNLPGPKEKSEC) is disordered.

In terms of assembly, homooligomer. Detected in brain, lung, liver, skeletal muscle, kidney, testis and cultured hippocampal neurons.

Its subcellular location is the cytoplasm. It is found in the cytoskeleton. The protein localises to the cell projection. It localises to the filopodium. Functionally, activates CDC42, a member of the Ras-like family of Rho- and Rac proteins, by exchanging bound GDP for free GTP. Plays a role in regulating the actin cytoskeleton and cell shape. Activates MAPK8. This is FYVE, RhoGEF and PH domain-containing protein 4 (Fgd4) from Rattus norvegicus (Rat).